Here is a 1048-residue protein sequence, read N- to C-terminus: Anguibactin system regulator (1048 aa).

Residues 965 to 1039 (PIITASEDRV…AFAIIMDRCR (75 aa)) enclose the Carrier domain.

This sequence belongs to the ATP-dependent AMP-binding enzyme family.

The protein operates within siderophore biosynthesis; anguibactin biosynthesis. Functionally, bifunctional protein that plays an essential role in virulence. Plays a role in both production of the siderophore anguibactin and regulation of iron transport genes. This Vibrio anguillarum (strain ATCC 68554 / 775) (Listonella anguillarum) protein is Anguibactin system regulator (angR).